The sequence spans 345 residues: Tropomodulin-4 (345 aa).

Residues 42–63 (NMLLPAGLRQRDQTKKSPTGPL) form a disordered region.

It belongs to the tropomodulin family. In terms of assembly, binds to the N-terminus of tropomyosin and to actin. In terms of tissue distribution, highly expressed in skeletal muscle.

The protein resides in the cytoplasm. Its subcellular location is the cytoskeleton. Blocks the elongation and depolymerization of the actin filaments at the pointed end. The Tmod/TM complex contributes to the formation of the short actin protofilament, which in turn defines the geometry of the membrane skeleton. The polypeptide is Tropomodulin-4 (TMOD4) (Homo sapiens (Human)).